Here is a 279-residue protein sequence, read N- to C-terminus: Tryptophan synthase alpha chain (279 aa).

Active-site proton acceptor residues include Glu-49 and Asp-60.

The protein belongs to the TrpA family. In terms of assembly, tetramer of two alpha and two beta chains.

It catalyses the reaction (1S,2R)-1-C-(indol-3-yl)glycerol 3-phosphate + L-serine = D-glyceraldehyde 3-phosphate + L-tryptophan + H2O. Its pathway is amino-acid biosynthesis; L-tryptophan biosynthesis; L-tryptophan from chorismate: step 5/5. The alpha subunit is responsible for the aldol cleavage of indoleglycerol phosphate to indole and glyceraldehyde 3-phosphate. This Nitrosospira multiformis (strain ATCC 25196 / NCIMB 11849 / C 71) protein is Tryptophan synthase alpha chain.